Consider the following 430-residue polypeptide: Probable proton-coupled zinc antiporter SLC30A4 (430 aa).

Residues 1-113 are Cytoplasmic-facing; the sequence is MAGPGAWKRL…LLKQRKVKTR (113 aa). Ser36 carries the post-translational modification Phosphoserine. A helical membrane pass occupies residues 114–134; the sequence is LTIAAVLYLLFMIGELVGGYM. Residues 135 to 143 lie on the Lumenal side of the membrane; it reads ANSLAIMTD. Residues 144 to 164 form a helical membrane-spanning segment; the sequence is ALHMLTDLSAIILTLLALWLS. Zn(2+) is bound by residues His146 and Asp150. The Cytoplasmic segment spans residues 165 to 178; the sequence is SKSPTRRFTFGFHR. Residues 179–199 form a helical membrane-spanning segment; the sequence is LEVLSAMISVMLVYVLMGFLL. Over 200–216 the chain is Lumenal; that stretch reads YEAVQRTIHMNYEINGD. The chain crosses the membrane as a helical span at residues 217-237; sequence VMLITAAVGVAVNVIMGFLLN. Residues 238-275 are Cytoplasmic-facing; the sequence is QSGHHHSHAHSHSLPSNSPSMVSSGHNHGQDSLAVRAA. Positions 240-265 are zinc binding; the sequence is GHHHSHAHSHSLPSNSPSMVSSGHNH. A disordered region spans residues 245-264; the sequence is HAHSHSLPSNSPSMVSSGHN. Residues 249–263 show a composition bias toward low complexity; that stretch reads HSLPSNSPSMVSSGH. Residues 276–296 traverse the membrane as a helical segment; sequence FVHALGDLVQSVGVLIAAYII. Residues His278 and Asp282 each contribute to the Zn(2+) site. Over 297-311 the chain is Lumenal; it reads RFKPEYKIADPICTY. A helical transmembrane segment spans residues 312-332; that stretch reads IFSLLVAFTTFRIIWDTVVII. Residues 333–430 are Cytoplasmic-facing; the sequence is LEGVPSHLNV…TCANCHSSST (98 aa).

This sequence belongs to the cation diffusion facilitator (CDF) transporter (TC 2.A.4) family. SLC30A subfamily. As to quaternary structure, homodimerization could regulate efficiency for zinc transport. Interacts with TMEM163. In terms of tissue distribution, widely expressed. Highly expressed in the brain and in mammary epithelial cell lines.

Its subcellular location is the endosome membrane. The protein localises to the late endosome membrane. The protein resides in the lysosome membrane. The catalysed reaction is Zn(2+)(in) + 2 H(+)(out) = Zn(2+)(out) + 2 H(+)(in). Probable proton-coupled zinc ion antiporter mediating zinc import from cytoplasm potentially into the endocytic compartment. Controls zinc deposition in milk. This Mus musculus (Mouse) protein is Probable proton-coupled zinc antiporter SLC30A4.